The sequence spans 701 residues: DNA ligase (701 aa).

Positions 1 to 21 (MSAKSTPDAGPQEQATEAEAE) are disordered. NAD(+) is bound by residues 50–54 (DADFD), 100–101 (SL), and Glu130. The active-site N6-AMP-lysine intermediate is Lys132. 4 residues coordinate NAD(+): Arg153, Glu193, Lys309, and Lys333. 4 residues coordinate Zn(2+): Cys427, Cys430, Cys446, and Cys452. A BRCT domain is found at 616–701 (SIARTLEGLS…LENGPQAPEG (86 aa)).

This sequence belongs to the NAD-dependent DNA ligase family. LigA subfamily. Mg(2+) serves as cofactor. Mn(2+) is required as a cofactor.

The catalysed reaction is NAD(+) + (deoxyribonucleotide)n-3'-hydroxyl + 5'-phospho-(deoxyribonucleotide)m = (deoxyribonucleotide)n+m + AMP + beta-nicotinamide D-nucleotide.. In terms of biological role, DNA ligase that catalyzes the formation of phosphodiester linkages between 5'-phosphoryl and 3'-hydroxyl groups in double-stranded DNA using NAD as a coenzyme and as the energy source for the reaction. It is essential for DNA replication and repair of damaged DNA. This chain is DNA ligase, found in Mycobacterium sp. (strain KMS).